We begin with the raw amino-acid sequence, 122 residues long: Replication factor A protein 3 (122 aa).

The protein belongs to the replication factor A protein 3 family. In terms of assembly, component of the heterotrimeric canonical replication protein A complex (RPA). The N-terminus is blocked.

The protein resides in the nucleus. As part of the replication protein A (RPA/RP-A), a single-stranded DNA-binding heterotrimeric complex, may play an essential role in DNA replication, recombination and repair. Binds and stabilizes single-stranded DNA intermediates, preventing complementary DNA reannealing and recruiting different proteins involved in DNA metabolism. Stimulates the activity of a cognate strand exchange protein (SEP1). In Saccharomyces cerevisiae (strain ATCC 204508 / S288c) (Baker's yeast), this protein is Replication factor A protein 3 (RFA3).